We begin with the raw amino-acid sequence, 148 residues long: Small ribosomal subunit protein eS6 (148 aa).

It belongs to the eukaryotic ribosomal protein eS6 family.

In Pyrobaculum aerophilum (strain ATCC 51768 / DSM 7523 / JCM 9630 / CIP 104966 / NBRC 100827 / IM2), this protein is Small ribosomal subunit protein eS6.